We begin with the raw amino-acid sequence, 339 residues long: Glycerol-3-phosphate dehydrogenase [NAD(P)+] (339 aa).

NADPH is bound by residues Ser-15, Tyr-16, His-36, and Lys-110. Sn-glycerol 3-phosphate contacts are provided by Lys-110, Gly-139, and Thr-141. Ala-143 contributes to the NADPH binding site. Sn-glycerol 3-phosphate contacts are provided by Lys-195, Asp-248, Ser-258, Arg-259, and Asn-260. The Proton acceptor role is filled by Lys-195. Arg-259 is an NADPH binding site. Residues Val-283 and Glu-285 each coordinate NADPH.

It belongs to the NAD-dependent glycerol-3-phosphate dehydrogenase family.

It is found in the cytoplasm. The catalysed reaction is sn-glycerol 3-phosphate + NAD(+) = dihydroxyacetone phosphate + NADH + H(+). It carries out the reaction sn-glycerol 3-phosphate + NADP(+) = dihydroxyacetone phosphate + NADPH + H(+). The protein operates within membrane lipid metabolism; glycerophospholipid metabolism. Functionally, catalyzes the reduction of the glycolytic intermediate dihydroxyacetone phosphate (DHAP) to sn-glycerol 3-phosphate (G3P), the key precursor for phospholipid synthesis. The chain is Glycerol-3-phosphate dehydrogenase [NAD(P)+] from Pectobacterium atrosepticum (strain SCRI 1043 / ATCC BAA-672) (Erwinia carotovora subsp. atroseptica).